The following is a 209-amino-acid chain: MADS-box transcription factor 2 (209 aa).

An MADS-box domain is found at 1 to 61 (MGRGKIEIKR…GKLYDYCSPK (61 aa)). A K-box domain is found at 84–170 (HKSLSAEIDR…AFKLHQQDIA (87 aa)).

Highly expressed in anthers and carpels. Expressed in pollen, tapetum and stigma.

The protein localises to the nucleus. In terms of biological role, probable transcription factor involved in the development of floral organs. B-class protein required for normal development of lodicules (whorl 2). The sequence is that of MADS-box transcription factor 2 (MADS2) from Oryza sativa subsp. japonica (Rice).